Here is a 260-residue protein sequence, read N- to C-terminus: Thiazole synthase (260 aa).

Lys96 serves as the catalytic Schiff-base intermediate with DXP. Residues Gly157, Ala184–Gly185, and Asn206–Thr207 contribute to the 1-deoxy-D-xylulose 5-phosphate site.

Belongs to the ThiG family. In terms of assembly, homotetramer. Forms heterodimers with either ThiH or ThiS.

Its subcellular location is the cytoplasm. The catalysed reaction is [ThiS sulfur-carrier protein]-C-terminal-Gly-aminoethanethioate + 2-iminoacetate + 1-deoxy-D-xylulose 5-phosphate = [ThiS sulfur-carrier protein]-C-terminal Gly-Gly + 2-[(2R,5Z)-2-carboxy-4-methylthiazol-5(2H)-ylidene]ethyl phosphate + 2 H2O + H(+). Its pathway is cofactor biosynthesis; thiamine diphosphate biosynthesis. Functionally, catalyzes the rearrangement of 1-deoxy-D-xylulose 5-phosphate (DXP) to produce the thiazole phosphate moiety of thiamine. Sulfur is provided by the thiocarboxylate moiety of the carrier protein ThiS. In vitro, sulfur can be provided by H(2)S. This Rhodopseudomonas palustris (strain TIE-1) protein is Thiazole synthase.